The primary structure comprises 425 residues: UDP-N-acetylglucosamine 1-carboxyvinyltransferase (425 aa).

23 to 24 contributes to the phosphoenolpyruvate binding site; sequence KN. Arg100 contacts UDP-N-acetyl-alpha-D-glucosamine. Cys124 (proton donor) is an active-site residue. Cys124 bears the 2-(S-cysteinyl)pyruvic acid O-phosphothioketal mark. Asp313 and Ile335 together coordinate UDP-N-acetyl-alpha-D-glucosamine.

The protein belongs to the EPSP synthase family. MurA subfamily.

It is found in the cytoplasm. The enzyme catalyses phosphoenolpyruvate + UDP-N-acetyl-alpha-D-glucosamine = UDP-N-acetyl-3-O-(1-carboxyvinyl)-alpha-D-glucosamine + phosphate. It participates in cell wall biogenesis; peptidoglycan biosynthesis. Cell wall formation. Adds enolpyruvyl to UDP-N-acetylglucosamine. This Wolbachia sp. subsp. Drosophila simulans (strain wRi) protein is UDP-N-acetylglucosamine 1-carboxyvinyltransferase.